A 111-amino-acid polypeptide reads, in one-letter code: Large ribosomal subunit protein uL22 (111 aa).

This sequence belongs to the universal ribosomal protein uL22 family. In terms of assembly, part of the 50S ribosomal subunit.

In terms of biological role, this protein binds specifically to 23S rRNA; its binding is stimulated by other ribosomal proteins, e.g. L4, L17, and L20. It is important during the early stages of 50S assembly. It makes multiple contacts with different domains of the 23S rRNA in the assembled 50S subunit and ribosome. Its function is as follows. The globular domain of the protein is located near the polypeptide exit tunnel on the outside of the subunit, while an extended beta-hairpin is found that lines the wall of the exit tunnel in the center of the 70S ribosome. This is Large ribosomal subunit protein uL22 from Xanthomonas oryzae pv. oryzae (strain PXO99A).